The chain runs to 94 residues: Large ribosomal subunit protein bL28 (94 aa).

The tract at residues Met-1–Ser-21 is disordered. Over residues Gly-11–His-20 the composition is skewed to polar residues.

Belongs to the bacterial ribosomal protein bL28 family.

The protein is Large ribosomal subunit protein bL28 of Leptospira interrogans serogroup Icterohaemorrhagiae serovar copenhageni (strain Fiocruz L1-130).